The primary structure comprises 834 residues: Dual specificity calcium/calmodulin-dependent 3',5'-cyclic nucleotide phosphodiesterase 1 (834 aa).

Residues 152-338 (HSHGRDDQQQ…DELSEVQPDA (187 aa)) form a disordered region. Low complexity predominate over residues 207-222 (THSGPTGPPSNTSSET). Basic and acidic residues predominate over residues 236 to 252 (TVRESVMEESPSKDPGD). The span at 260–301 (STSTLTSQTTTSSSATAEPSAKAAESQAGSAGSSGSCSNPAA) shows a compositional bias: low complexity. The span at 313–322 (WARSMSTNKT) shows a compositional bias: polar residues. Residues 364–387 (EKPKFRSVAHAIRAGIFVDRMYRR) form a calmodulin-binding region. One can recognise a PDEase domain in the interval 392–786 (ALTAFPPDVV…RIWKEQAVKD (395 aa)). Catalysis depends on histidine 469, which acts as the Proton donor. Zn(2+)-binding residues include histidine 473, histidine 509, aspartate 510, and aspartate 617. Aspartate 510 is a binding site for Mg(2+). 2 disordered regions span residues 720–744 (IVIP…AKTT) and 797–834 (EEAA…GAAA). Basic and acidic residues predominate over residues 732-741 (DKPRDHRTEA). Residues 823–834 (EPAAEPADGAAA) show a composition bias toward low complexity.

Belongs to the cyclic nucleotide phosphodiesterase family. PDE1 subfamily. The cofactor is Zn(2+). Mg(2+) serves as cofactor. In terms of tissue distribution, expressed in the head (at protein level). Expressed in Malpighian tubules. Expressed in neurons in the brain and ventral ganglia with male flies having higher levels of expression in the abdominal ganglia compared to female flies.

The catalysed reaction is a nucleoside 3',5'-cyclic phosphate + H2O = a nucleoside 5'-phosphate + H(+). The enzyme catalyses 3',5'-cyclic GMP + H2O = GMP + H(+). It catalyses the reaction 3',5'-cyclic AMP + H2O = AMP + H(+). Its activity is regulated as follows. Type I PDE are activated by the binding of calmodulin in the presence of Ca(2+). Inhibited by zaprinast and sildenafil. Functionally, cyclic nucleotide phosphodiesterase with a dual specificity for the second messengers cAMP and cGMP, which are key regulators of many important physiological processes. Required for male fertility and male mating behavior. The chain is Dual specificity calcium/calmodulin-dependent 3',5'-cyclic nucleotide phosphodiesterase 1 from Drosophila melanogaster (Fruit fly).